The chain runs to 121 residues: Large ribosomal subunit protein bL12 (121 aa).

Belongs to the bacterial ribosomal protein bL12 family. As to quaternary structure, homodimer. Part of the ribosomal stalk of the 50S ribosomal subunit. Forms a multimeric L10(L12)X complex, where L10 forms an elongated spine to which 2 to 4 L12 dimers bind in a sequential fashion. Binds GTP-bound translation factors.

Its function is as follows. Forms part of the ribosomal stalk which helps the ribosome interact with GTP-bound translation factors. Is thus essential for accurate translation. This Bacillus pumilus (strain SAFR-032) protein is Large ribosomal subunit protein bL12.